Reading from the N-terminus, the 390-residue chain is Nuclear receptor subfamily 2 group F member 6 (390 aa).

The segment covering 1 to 15 (MAMVTGGWGDPGGDT) has biased composition (gly residues). The tract at residues 1–50 (MAMVTGGWGDPGGDTNGVDKAGGSYPRATEDDSASPPGATSDAEPGDEER) is disordered. Phosphoserine is present on residues Ser-35 and Ser-41. The nuclear receptor DNA-binding region spans 54-129 (QVDCVVCGDK…VGMRKEAVQR (76 aa)). The NR C4-type zinc finger occupies 57–77 (CVVCGDKSSGKHYGVFTCEGC). A Phosphoserine modification is found at Ser-84. An NR C4-type zinc finger spans residues 93-117 (CRSNRDCQIDQHHRNQCQYCRLKKC). The NR LBD domain occupies 157 to 380 (PVSELIAQLL…TLIRDMLLSG (224 aa)). Positions 314–390 (LQEKAQVALT…STFNWPYGSG (77 aa)) are important for dimerization.

The protein belongs to the nuclear hormone receptor family. NR2 subfamily. As to quaternary structure, binds DNA as dimer; homodimer and heterodimer with NR2F2 and probably NR2F1. Interacts with THRB.

Its subcellular location is the nucleus. Its function is as follows. Transcription factor predominantly involved in transcriptional repression. Binds to promoter/enhancer response elements that contain the imperfect 5'-AGGTCA-3' direct or inverted repeats with various spacings which are also recognized by other nuclear hormone receptors. Involved in modulation of hormonal responses. Represses transcriptional activity of the lutropin-choriogonadotropic hormone receptor/LHCGR gene, the renin/REN gene and the oxytocin-neurophysin/OXT gene. Represses the triiodothyronine-dependent and -independent transcriptional activity of the thyroid hormone receptor gene in a cell type-specific manner. The corepressing function towards thyroid hormone receptor beta/THRB involves at least in part the inhibition of THRB binding to triiodothyronine response elements (TREs) by NR2F6. Inhibits NFATC transcription factor DNA binding and subsequently its transcriptional activity. Acts as transcriptional repressor of IL-17 expression in Th-17 differentiated CD4(+) T cells and may be involved in induction and/or maintenance of peripheral immunological tolerance and autoimmunity. Involved in development of forebrain circadian clock; is required early in the development of the locus coeruleus (LC). The sequence is that of Nuclear receptor subfamily 2 group F member 6 (Nr2f6) from Mus musculus (Mouse).